Here is a 107-residue protein sequence, read N- to C-terminus: Small ribosomal subunit protein uS10c (107 aa).

The protein belongs to the universal ribosomal protein uS10 family. As to quaternary structure, part of the 30S ribosomal subunit.

The protein resides in the plastid. The protein localises to the chloroplast. Functionally, involved in the binding of tRNA to the ribosomes. The protein is Small ribosomal subunit protein uS10c of Phaeodactylum tricornutum (strain CCAP 1055/1).